Consider the following 215-residue polypeptide: Nucleoside triphosphate pyrophosphatase (215 aa).

Belongs to the Maf family. A divalent metal cation is required as a cofactor.

The protein localises to the cytoplasm. It carries out the reaction a ribonucleoside 5'-triphosphate + H2O = a ribonucleoside 5'-phosphate + diphosphate + H(+). The enzyme catalyses a 2'-deoxyribonucleoside 5'-triphosphate + H2O = a 2'-deoxyribonucleoside 5'-phosphate + diphosphate + H(+). In terms of biological role, nucleoside triphosphate pyrophosphatase. May have a dual role in cell division arrest and in preventing the incorporation of modified nucleotides into cellular nucleic acids. This is Nucleoside triphosphate pyrophosphatase from Rickettsia conorii (strain ATCC VR-613 / Malish 7).